Reading from the N-terminus, the 156-residue chain is Small ribosomal subunit protein uS7 (156 aa).

Belongs to the universal ribosomal protein uS7 family. As to quaternary structure, part of the 30S ribosomal subunit. Contacts proteins S9 and S11.

In terms of biological role, one of the primary rRNA binding proteins, it binds directly to 16S rRNA where it nucleates assembly of the head domain of the 30S subunit. Is located at the subunit interface close to the decoding center, probably blocks exit of the E-site tRNA. The sequence is that of Small ribosomal subunit protein uS7 from Tolumonas auensis (strain DSM 9187 / NBRC 110442 / TA 4).